We begin with the raw amino-acid sequence, 184 residues long: NADH-quinone oxidoreductase subunit B (184 aa).

Residues Cys-63, Cys-64, Cys-128, and Cys-158 each coordinate [4Fe-4S] cluster.

Belongs to the complex I 20 kDa subunit family. In terms of assembly, NDH-1 is composed of 14 different subunits. Subunits NuoB, C, D, E, F, and G constitute the peripheral sector of the complex. The cofactor is [4Fe-4S] cluster.

The protein localises to the cell inner membrane. The catalysed reaction is a quinone + NADH + 5 H(+)(in) = a quinol + NAD(+) + 4 H(+)(out). In terms of biological role, NDH-1 shuttles electrons from NADH, via FMN and iron-sulfur (Fe-S) centers, to quinones in the respiratory chain. The immediate electron acceptor for the enzyme in this species is believed to be ubiquinone. Couples the redox reaction to proton translocation (for every two electrons transferred, four hydrogen ions are translocated across the cytoplasmic membrane), and thus conserves the redox energy in a proton gradient. This is NADH-quinone oxidoreductase subunit B from Xylella fastidiosa (strain M12).